The primary structure comprises 233 residues: Protein TIPIN homolog (233 aa).

Residues 1 to 14 (MDEMEDFFENDELD) are compositionally biased toward acidic residues. Disordered regions lie at residues 1–39 (MDEMEDFFENDELDREPSPMGDEAIEDNSGEGGTRRVVE) and 134–233 (GETG…NNDW). Basic and acidic residues-rich tracts occupy residues 163 to 190 (DLFKDLPEKEVTTEKAKNSEKSDQKTAE) and 197 to 216 (EEYRMMEEERLREEQEAKEA). A compositionally biased stretch (acidic residues) spans 217–227 (ADEDALMEDFG).

It belongs to the CSM3 family.

The protein resides in the cytoplasm. Its subcellular location is the nucleus. Functionally, required for normal progression of S-phase. Important for cell survival after DNA damage or replication stress. This is Protein TIPIN homolog from Caenorhabditis elegans.